A 261-amino-acid chain; its full sequence is MELKIGRAIIKKGLEVLYEYSDVDVAIVGAGPSGLTAARYLAEKGFKVLVFERRFSFGGGIGPGGNMLPSIVVQEEALPILRDFKVRYQPAGDGLYTVDPAELIAKLAAGAIDAGAKIILGVHVDDVIFRGDPPRVAGLLWIWTPIQMSGMHVDPLYTMAKAVIDATGHDAEVISVAARKVPELGIQLPGEKSAWSEVSEKLVVEYTGKVAPGLYVTGMAVAAVHGLPRMGPIFGGMMLSGKKIAEIVAKDLAEEAYALRA.

NAD(+) is bound by residues serine 33, 52-53 (ER), glycine 60, valine 124, and 152-154 (HVD). Positions 154 and 169 each coordinate Fe cation. NAD(+) is bound at residue methionine 219. Arginine 229 is a binding site for glycine.

This sequence belongs to the THI4 family. In terms of assembly, homooctamer; tetramer of dimers. It depends on Fe(2+) as a cofactor.

The enzyme catalyses hydrogen sulfide + glycine + NAD(+) = ADP-5-ethyl-4-methylthiazole-2-carboxylate + nicotinamide + 3 H2O + H(+). It participates in cofactor biosynthesis; thiamine diphosphate biosynthesis. Involved in the biosynthesis of the thiazole moiety of thiamine. Catalyzes the conversion of NAD and glycine to adenosine diphosphate 5-(2-hydroxyethyl)-4-methylthiazole-2-carboxylate (ADT), an adenylated thiazole intermediate, using free sulfide as a source of sulfur. In Pyrobaculum arsenaticum (strain DSM 13514 / JCM 11321 / PZ6), this protein is Thiamine thiazole synthase.